The chain runs to 158 residues: Cyclic pyranopterin monophosphate synthase (158 aa).

Residues 75 to 77 and 113 to 114 each bind substrate; these read LCH and ME. Residue D128 is part of the active site.

Belongs to the MoaC family. As to quaternary structure, homohexamer; trimer of dimers.

The catalysed reaction is (8S)-3',8-cyclo-7,8-dihydroguanosine 5'-triphosphate = cyclic pyranopterin phosphate + diphosphate. The protein operates within cofactor biosynthesis; molybdopterin biosynthesis. In terms of biological role, catalyzes the conversion of (8S)-3',8-cyclo-7,8-dihydroguanosine 5'-triphosphate to cyclic pyranopterin monophosphate (cPMP). In Paraburkholderia phytofirmans (strain DSM 17436 / LMG 22146 / PsJN) (Burkholderia phytofirmans), this protein is Cyclic pyranopterin monophosphate synthase.